A 686-amino-acid polypeptide reads, in one-letter code: MRLEIPVGERAIVLETGKLARQAGGAVTARFGDTTVLSTATRSEEPRPGATFLPLSVDIEERMSSAGKIPGGFLKREGKPSEKAILTARLTDRPIRPLFPKDYYYEVQVIGTVLVADQENPYDVVSMVGASAALALSDIPFGGPIGAVRVGRHPDGGFILNPTYQQLEESDLDIVVAGTKEAITMVEAGAREVTEDVVVEALEVAQGVIREQAEAIERWAAEHGEEKQPFEEPGENPFVEELRGAYLERIKEGLISTDRRARHEAIDLLKEELVEGRSEEEVPLVLDALAQLQKEAFRKLYLEDRKRTDLRAFDEIRPTTAEAHVLPRVHGTGLFTRGETQVLSSLALADLGLVQRLDTLEPQTTKRYMHHYYFPPYSTGETGRLGPPRRREIGHGALAERALLPVIPSEEEFPYAIRIISEVLESNGSSSMASVCGSTLALMDGGVPIKAPVAGVAMGLVKEGDDYVILTDIQGLEDHMGDMDFKVAGTRDGITALQMDMKITGVSAELLKEALEQARRGRLQILDIMREEIAEPRPEISDHAPRVEVIQIPTDKIGLLIGPGGKTINALQDEYGVNISVENDGTVYVAGVEGMSVKAAVSAIKGMTKEVEAGDIYVGKVVKTTNFGAFVELTPGRDGLLHISRLAPGKQRVRRVEDVLNEGDVVKVRVLEIDKQNRISLEMVED.

Mg(2+) is bound by residues D478 and D484. In terms of domain architecture, KH spans 545–604 (PRVEVIQIPTDKIGLLIGPGGKTINALQDEYGVNISVENDGTVYVAGVEGMSVKAAVSAI). The 71-residue stretch at 614–684 (GDIYVGKVVK…KQNRISLEMV (71 aa)) folds into the S1 motif domain.

It belongs to the polyribonucleotide nucleotidyltransferase family. It depends on Mg(2+) as a cofactor.

Its subcellular location is the cytoplasm. The catalysed reaction is RNA(n+1) + phosphate = RNA(n) + a ribonucleoside 5'-diphosphate. Its function is as follows. Involved in mRNA degradation. Catalyzes the phosphorolysis of single-stranded polyribonucleotides processively in the 3'- to 5'-direction. The polypeptide is Polyribonucleotide nucleotidyltransferase (Rubrobacter xylanophilus (strain DSM 9941 / JCM 11954 / NBRC 16129 / PRD-1)).